The sequence spans 119 residues: MKYSKNESRQRRKIRISKKVSGTAERPRLVVYRSNLHVYAQIVNDLDGATLVATSTLALGKNESGLHCNKGGAEKVGIEIARMAKEKNIDKVVFDRNGYLYHGRVKAVADGAREGGLEF.

It belongs to the universal ribosomal protein uL18 family. In terms of assembly, part of the 50S ribosomal subunit; part of the 5S rRNA/L5/L18/L25 subcomplex. Contacts the 5S and 23S rRNAs.

This is one of the proteins that bind and probably mediate the attachment of the 5S RNA into the large ribosomal subunit, where it forms part of the central protuberance. This chain is Large ribosomal subunit protein uL18, found in Desulfovibrio desulfuricans (strain ATCC 27774 / DSM 6949 / MB).